Reading from the N-terminus, the 156-residue chain is Small ribosomal subunit protein uS7 (156 aa).

It belongs to the universal ribosomal protein uS7 family. As to quaternary structure, part of the 30S ribosomal subunit. Contacts proteins S9 and S11.

One of the primary rRNA binding proteins, it binds directly to 16S rRNA where it nucleates assembly of the head domain of the 30S subunit. Is located at the subunit interface close to the decoding center, probably blocks exit of the E-site tRNA. The protein is Small ribosomal subunit protein uS7 of Prochlorococcus marinus (strain MIT 9301).